The sequence spans 313 residues: Cytochrome c biogenesis protein CcsA (313 aa).

The next 8 membrane-spanning stretches (helical) occupy residues 13–35 (ISFS…EIAG), 43–63 (GMIA…IYSG), 67–87 (LSNL…IHMI), 96–116 (FLSS…TSGL), 142–162 (MLLS…LLVI), 219–239 (VIGI…VWAN), 252–269 (ETWA…LHTR), and 280–300 (AIVA…VNLL).

It belongs to the CcmF/CycK/Ccl1/NrfE/CcsA family. As to quaternary structure, may interact with Ccs1.

The protein resides in the plastid. It localises to the chloroplast thylakoid membrane. In terms of biological role, required during biogenesis of c-type cytochromes (cytochrome c6 and cytochrome f) at the step of heme attachment. This Amborella trichopoda protein is Cytochrome c biogenesis protein CcsA.